Consider the following 1003-residue polypeptide: Phosphatidylinositol 4,5-bisphosphate 5-phosphatase A (1003 aa).

2 disordered regions span residues Met-1 to Ser-110 and Ala-147 to Cys-414. The RSXSXX motif 1 signature appears at Arg-6–Arg-11. The span at Arg-11–Thr-24 shows a compositional bias: low complexity. Arg-56 is subject to Asymmetric dimethylarginine; alternate. Residue Arg-56 is modified to Omega-N-methylarginine; alternate. Arg-65 bears the Omega-N-methylarginine mark. The residue at position 76 (Arg-76) is an Asymmetric dimethylarginine. An Asymmetric dimethylarginine; alternate modification is found at Arg-83. Arg-83 carries the omega-N-methylarginine; alternate modification. Residues Leu-160–Ser-174 are compositionally biased toward polar residues. Residue Ser-171 is modified to Phosphoserine. Low complexity predominate over residues Ala-180–Pro-196. The span at Pro-197–Val-210 shows a compositional bias: pro residues. Residues Ala-284–Glu-294 show a composition bias toward basic and acidic residues. Phosphoserine occurs at positions 292 and 325. Residues Val-338–Ser-348 are compositionally biased toward pro residues. Residues Pro-346–Arg-351 carry the SH3-binding motif. Low complexity-rich tracts occupy residues Pro-349–Pro-361 and Gln-390–Thr-413. The RSXSXX motif 2 signature appears at Arg-351 to Ser-356. A catalytic region spans residues Ile-422 to Phe-725. Residues Ile-726–Ser-837 form a required for ruffle localization region. The segment at Pro-839 to Pro-1003 is disordered. Positions Thr-840–Ser-855 are enriched in low complexity. 2 short sequence motifs (RSXSXX motif) span residues Arg-871–Gly-876 and Arg-882–Gly-887. Residue Ser-900 is modified to Phosphoserine. Low complexity-rich tracts occupy residues Ser-907–Arg-919 and Ser-927–Gly-943. The RSXSXX motif 5 motif lies at Arg-908–Gln-913. Ser-987 is subject to Phosphoserine.

Belongs to the inositol 1,4,5-trisphosphate 5-phosphatase type II family.

Its subcellular location is the cytoplasm. It carries out the reaction 1D-myo-inositol 1,4,5-trisphosphate + H2O = 1D-myo-inositol 1,4-bisphosphate + phosphate. It catalyses the reaction 1D-myo-inositol 1,3,4,5-tetrakisphosphate + H2O = 1D-myo-inositol 1,3,4-trisphosphate + phosphate. The enzyme catalyses a 1,2-diacyl-sn-glycero-3-phospho-(1D-myo-inositol-4,5-bisphosphate) + H2O = a 1,2-diacyl-sn-glycero-3-phospho-(1D-myo-inositol 4-phosphate) + phosphate. Its function is as follows. Inositol 5-phosphatase, which converts inositol 1,4,5-trisphosphate to inositol 1,4-bisphosphate. Also converts phosphatidylinositol 4,5-bisphosphate to phosphatidylinositol 4-phosphate and inositol 1,3,4,5-tetrakisphosphate to inositol 1,3,4-trisphosphate in vitro. May be involved in modulation of the function of inositol and phosphatidylinositol polyphosphate-binding proteins that are present at membranes ruffles. The chain is Phosphatidylinositol 4,5-bisphosphate 5-phosphatase A (Inpp5j) from Mus musculus (Mouse).